A 227-amino-acid chain; its full sequence is Ribonuclease 3 (227 aa).

One can recognise an RNase III domain in the interval 3 to 130; it reads TNAISKIIKY…LIGAIYLDGG (128 aa). Mg(2+) is bound at residue E43. D47 is an active-site residue. The Mg(2+) site is built by N116 and E119. Residue E119 is part of the active site. The region spanning 155 to 224 is the DRBM domain; that stretch reads DAKTILQEWA…ASLMLAKINY (70 aa).

The protein belongs to the ribonuclease III family. Homodimer. The cofactor is Mg(2+).

The protein resides in the cytoplasm. The catalysed reaction is Endonucleolytic cleavage to 5'-phosphomonoester.. Functionally, digests double-stranded RNA. Involved in the processing of primary rRNA transcript to yield the immediate precursors to the large and small rRNAs (23S and 16S). Processes some mRNAs, and tRNAs when they are encoded in the rRNA operon. Processes pre-crRNA and tracrRNA of type II CRISPR loci if present in the organism. The polypeptide is Ribonuclease 3 (Ehrlichia ruminantium (strain Gardel)).